Reading from the N-terminus, the 318-residue chain is Transcription factor FER-LIKE IRON DEFICIENCY-INDUCED TRANSCRIPTION FACTOR (318 aa).

A disordered region spans residues 90-138; the sequence is FDGDSVRAGGEEDEEDYNDGDDSSATTTNNDGTRKTKTDRSRTLISERR. Acidic residues predominate over residues 100–111; that stretch reads EEDEEDYNDGDD. A compositionally biased stretch (basic and acidic residues) spans 121–136; sequence GTRKTKTDRSRTLISE. Positions 127–176 constitute a bHLH domain; that stretch reads TDRSRTLISERRRRGRMKDKLYALRSLVPNITKMDKASIVGDAVLYVQEL.

Homodimer. In terms of tissue distribution, expressed in roots and inflorescence, and to a lower extent, in leaves and stems. In roots, confined to the outer cell layers, specifically in the differentiation zone. Also detected in the endodermis and inner tissues of the central cylinder.

It is found in the nucleus. Its function is as follows. Transcription factor. Essential protein involved in iron uptake responses. Regulates FRO2 at the level of mRNA accumulation and IRT1 at the level of protein accumulation. Confers enhanced iron mobilization responses at low iron supply. This Arabidopsis thaliana (Mouse-ear cress) protein is Transcription factor FER-LIKE IRON DEFICIENCY-INDUCED TRANSCRIPTION FACTOR (FIT).